A 509-amino-acid polypeptide reads, in one-letter code: Dye-decolorizing peroxidase AauDyP1 (509 aa).

An N-terminal signal peptide occupies residues 1 to 22 (MRLSPVFVALLSGLLAADLGLA). A propeptide spanning residues 23–61 (RSVAPRVADSPAAVTGTRKTSLLKNVAGLPPVPSAAQVA) is cleaved from the precursor. Asp-229 acts as the Proton acceptor in catalysis. The N-linked (GlcNAc...) asparagine glycan is linked to Asn-343. His-365 contacts heme. Residues Asn-383, Asn-410, and Asn-476 are each glycosylated (N-linked (GlcNAc...) asparagine).

It belongs to the DyP-type peroxidase family. Requires heme b as cofactor.

The protein localises to the secreted. The catalysed reaction is Reactive Blue 5 + 2 H2O2 = 2,2'-disulfonyl azobenzene + 3-[(4-amino-6-chloro-1,3,5-triazin-2-yl)amino]benzenesulfonate + phthalate + 2 H2O + 2 H(+). It carries out the reaction 2 a phenolic donor + H2O2 = 2 a phenolic radical donor + 2 H2O. Inhibited by imidazole. Manganese-independent peroxidase that is able to convert a large number of compounds, but its physiological substrate is not known. In addition to classic peroxidase substrates (e.g. 2,6-dimethoxyphenol), oxidizes dyes such as Reactive Blue 5 and Reactive Black 5. The protein is Dye-decolorizing peroxidase AauDyP1 of Auricularia auricula-judae (Judas ear fungus).